Reading from the N-terminus, the 146-residue chain is Thyroid hormone-inducible hepatic protein (146 aa).

Positions 83–104 (KVAGSEENGTAETEEVEDESAS) are disordered. The segment covering 94-104 (ETEEVEDESAS) has biased composition (acidic residues).

It belongs to the SPOT14 family. In terms of assembly, homodimer. Heterodimer with MID1IP1. Interacts with THRB and PLAGL1. In terms of tissue distribution, mainly expressed in tissues that synthesize triglycerides.

The protein localises to the nucleus. It localises to the cytoplasm. Plays a role in the regulation of lipogenesis, especially in lactating mammary gland. Important for the biosynthesis of triglycerides with medium-length fatty acid chains. May modulate lipogenesis by interacting with MID1IP1 and preventing its interaction with ACACA. May function as transcriptional coactivator. May modulate the transcription factor activity of THRB. This chain is Thyroid hormone-inducible hepatic protein (THRSP), found in Homo sapiens (Human).